The following is a 678-amino-acid chain: Exoribonuclease 2 (678 aa).

In terms of domain architecture, RNB spans 193–521; it reads REDLTALPFV…INHRLLKAHI (329 aa). The region spanning 568–650 is the S1 motif domain; that stretch reads ETRFQAEIFD…ENRSLVGKPT (83 aa). The segment at 659–678 is disordered; that stretch reads ETQTSAEQPAEGAENNEPQV.

This sequence belongs to the RNR ribonuclease family. RNase II subfamily.

It localises to the cytoplasm. The catalysed reaction is Exonucleolytic cleavage in the 3'- to 5'-direction to yield nucleoside 5'-phosphates.. Involved in mRNA degradation. Hydrolyzes single-stranded polyribonucleotides processively in the 3' to 5' direction. This Vibrio cholerae serotype O1 (strain ATCC 39315 / El Tor Inaba N16961) protein is Exoribonuclease 2.